A 237-amino-acid polypeptide reads, in one-letter code: MRFDPPLEEGRLLRRYKRFLADIETTTGELLTIHCPNTGSMLNCMVEGGQVWFSRSNDPKRKLPGTWEISETPQGRLACVNTGRANGLVEEALRAGLISELNGFTGLKREVPYGQENSRIDFRLDYPDGPAYVEVKSVTLGFDGTPVAAFPDAVTQRGAKHLRELASLAREGVRAVQLYCVNLSGIDAVRPAQEIDPGYAAALREARAAGVEVLAYGVCLTAEQVFIDRRLEVLLGD.

This sequence belongs to the SfsA family.

This is Sugar fermentation stimulation protein homolog from Pseudomonas fluorescens (strain ATCC BAA-477 / NRRL B-23932 / Pf-5).